Here is a 669-residue protein sequence, read N- to C-terminus: DNA mismatch repair protein MutL (669 aa).

Disordered stretches follow at residues N354 to Y402 and T448 to S479. Residues T448–K468 are compositionally biased toward polar residues.

Belongs to the DNA mismatch repair MutL/HexB family.

This protein is involved in the repair of mismatches in DNA. It is required for dam-dependent methyl-directed DNA mismatch repair. May act as a 'molecular matchmaker', a protein that promotes the formation of a stable complex between two or more DNA-binding proteins in an ATP-dependent manner without itself being part of a final effector complex. This chain is DNA mismatch repair protein MutL, found in Pectobacterium carotovorum subsp. carotovorum (strain PC1).